Consider the following 116-residue polypeptide: Protein Rev (116 aa).

2 positions are modified to phosphoserine; by host CK2: serine 5 and serine 8. A homomultimerization region spans residues 18–26 (LIKVLYQSN). The segment at 23–48 (YQSNPPPSSEGTRQARRNRRRRWRER) is disordered. The Nuclear localization signal and RNA-binding (RRE) motif lies at 34–50 (TRQARRNRRRRWRERQR). Basic residues predominate over residues 36-47 (QARRNRRRRWRE). Residues 73–84 (FQLPPLERLTLD) carry the Nuclear export signal and binding to XPO1 motif. Residues 90 to 116 (GTSGTQGVGSPQILVESPPVLDSGTKE) are disordered. Serine 92 and serine 99 each carry phosphoserine; by host.

It belongs to the HIV-1 REV protein family. Homomultimer; when bound to the RRE. Multimeric assembly is essential for activity and may involve XPO1. Binds to human KPNB1, XPO1, TNPO1, RANBP5 and IPO7. Interacts with the viral Integrase. Interacts with human KHDRBS1. Interacts with human NAP1; this interaction decreases Rev multimerization and stimulates its activity. Interacts with human DEAD-box helicases DDX3 and DDX24; these interactions may serve for viral RNA export to the cytoplasm and packaging, respectively. Interacts with human PSIP1; this interaction may inhibit HIV-1 DNA integration by promoting dissociation of the Integrase-LEDGF/p75 complex. Asymmetrically arginine dimethylated at one site by host PRMT6. Methylation impairs the RNA-binding activity and export of viral RNA from the nucleus to the cytoplasm. Post-translationally, phosphorylated by protein kinase CK2. Presence of, and maybe binding to the N-terminus of the regulatory beta subunit of CK2 is necessary for CK2-mediated Rev's phosphorylation.

It localises to the host nucleus. The protein localises to the host nucleolus. Its subcellular location is the host cytoplasm. In terms of biological role, escorts unspliced or incompletely spliced viral pre-mRNAs (late transcripts) out of the nucleus of infected cells. These pre-mRNAs carry a recognition sequence called Rev responsive element (RRE) located in the env gene, that is not present in fully spliced viral mRNAs (early transcripts). This function is essential since most viral proteins are translated from unspliced or partially spliced pre-mRNAs which cannot exit the nucleus by the pathway used by fully processed cellular mRNAs. Rev itself is translated from a fully spliced mRNA that readily exits the nucleus. Rev's nuclear localization signal (NLS) binds directly to KPNB1/Importin beta-1 without previous binding to KPNA1/Importin alpha-1. KPNB1 binds to the GDP bound form of RAN (Ran-GDP) and targets Rev to the nucleus. In the nucleus, the conversion from Ran-GDP to Ran-GTP dissociates Rev from KPNB1 and allows Rev's binding to the RRE in viral pre-mRNAs. Rev multimerization on the RRE via cooperative assembly exposes its nuclear export signal (NES) to the surface. Rev can then form a complex with XPO1/CRM1 and Ran-GTP, leading to nuclear export of the complex. Conversion from Ran-GTP to Ran-GDP mediates dissociation of the Rev/RRE/XPO1/RAN complex, so that Rev can return to the nucleus for a subsequent round of export. Beside KPNB1, also seems to interact with TNPO1/Transportin-1, RANBP5/IPO5 and IPO7/RANBP7 for nuclear import. The nucleoporin-like HRB/RIP is an essential cofactor that probably indirectly interacts with Rev to release HIV RNAs from the perinuclear region to the cytoplasm. This chain is Protein Rev, found in Human immunodeficiency virus type 1 group M subtype B (isolate YU-2) (HIV-1).